The chain runs to 138 residues: ATP synthase epsilon chain, chloroplastic (138 aa).

It belongs to the ATPase epsilon chain family. As to quaternary structure, F-type ATPases have 2 components, CF(1) - the catalytic core - and CF(0) - the membrane proton channel. CF(1) has five subunits: alpha(3), beta(3), gamma(1), delta(1), epsilon(1). CF(0) has three main subunits: a, b and c.

It is found in the plastid. The protein localises to the chloroplast thylakoid membrane. In terms of biological role, produces ATP from ADP in the presence of a proton gradient across the membrane. The sequence is that of ATP synthase epsilon chain, chloroplastic from Staurastrum punctulatum (Green alga).